We begin with the raw amino-acid sequence, 1959 residues long: Sodium channel protein type 10 subunit alpha (1959 aa).

Residues 1 to 125 (MEFPIGSVGT…FNLIRRTAIK (125 aa)) lie on the Cytoplasmic side of the membrane. The disordered stretch occupies residues 30 to 53 (AHGAAKKARAKHGERKGQDEKPRP). Basic residues predominate over residues 33–43 (AAKKARAKHGE). Residues 44 to 53 (RKGQDEKPRP) show a composition bias toward basic and acidic residues. The stretch at 116 to 404 (FNLIRRTAIK…VTMAYEEQNQ (289 aa)) is one I repeat. Residues 126–149 (VSVHAWFSIFITITILFNCVCMTQ) form a helical membrane-spanning segment. The Extracellular portion of the chain corresponds to 150–154 (NDLPE). A helical membrane pass occupies residues 155 to 174 (KIEYAFTVIYTFEALIKILA). The Cytoplasmic portion of the chain corresponds to 175–187 (RGFCLNEFTYLRD). Residues 188–206 (PWNWLDFSVITLAYVGAAI) form a helical membrane-spanning segment. The Extracellular segment spans residues 207 to 212 (DLRGIS). Residues 213–232 (GLRTFRVLRALKTVSVIPGL) form a helical; Voltage-sensor membrane-spanning segment. Residues 233 to 248 (KVIVGALIHSVRKLAD) lie on the Cytoplasmic side of the membrane. The helical transmembrane segment at 249-272 (VTILTVFCLSVFALVGLQLFKGNL) threads the bilayer. The Extracellular portion of the chain corresponds to 273-340 (KNKCIKRSTD…PDFNYTSFDS (68 aa)). Residues C276 and C318 are joined by a disulfide bond. 3 N-linked (GlcNAc...) asparagine glycosylation sites follow: N288, N311, and N334. The pore-forming intramembrane region spans 341 to 365 (FAWAFLSLFRLMTQDSWERLYQQTL). The Extracellular portion of the chain corresponds to 366–372 (RASGKMY). A helical membrane pass occupies residues 373-398 (MVFFVLVIFLGSFYLVNLILAVVTMA). The Cytoplasmic portion of the chain corresponds to 399-659 (YEEQNQATIA…KWMKFKMVLF (261 aa)). Phosphoserine is present on residues S440, S443, S466, and S478. Disordered regions lie at residues 442 to 484 (HSHN…YNQR) and 510 to 578 (SQDV…ELTT). Residues 475–484 (SPQSDPYNQR) are compositionally biased toward polar residues. A compositionally biased stretch (basic and acidic residues) spans 523-533 (GVFHGDHESHR). A phosphoserine mark is found at S612 and S615. An II repeat occupies 647–911 (CCPKWMKFKM…EDDGEVNNLQ (265 aa)). Residues 660–684 (ELVTDPFAELTITLCIVVNTIFMAM) traverse the membrane as a helical segment. The Extracellular segment spans residues 685 to 695 (EHYPMTDAFDA). The helical transmembrane segment at 696–719 (MLQAGNIVFTVFFTMEMAFKIIAF) threads the bilayer. The Cytoplasmic portion of the chain corresponds to 720–727 (DPYYYFQK). Residues 728 to 747 (KWNVFDCVIVTVSLLELSIA) form a helical membrane-spanning segment. At 748–753 (KKGSLS) the chain is on the extracellular side. A helical; Voltage-sensor membrane pass occupies residues 754-773 (VLRTFRLLRVFKLAKSWPTL). The Cytoplasmic portion of the chain corresponds to 774–789 (NTLIKIIGNSVGALGN). A helical membrane pass occupies residues 790–810 (LTFILAIIVFIFALVGKQLLG). The Extracellular segment spans residues 811–834 (EDYGCRKDGTALWNEGQLRWHMCD). The segment at residues 835 to 855 (FFHSFLVIFRILCGEWIENMW) is an intramembrane region (pore-forming). Topologically, residues 856–864 (VCMQVSEKS) are extracellular. The cysteines at positions 857 and 866 are disulfide-linked. Residues 865-890 (ICLILFLTVMVLGNLVVLNLFIALLL) traverse the membrane as a helical segment. The Cytoplasmic portion of the chain corresponds to 891 to 1149 (NSFSADNLTA…GWQVRKTCYR (259 aa)). The segment covering 1004–1016 (GESDLDELEEDIE) has biased composition (acidic residues). 2 disordered regions span residues 1004-1034 (GESD…QQDQ) and 1071-1097 (ATPQ…PDPE). One copy of the III repeat lies at 1142–1451 (QVRKTCYRIV…KKYYNAMKKL (310 aa)). The chain crosses the membrane as a helical span at residues 1150–1173 (IVEHSWFESFIIFMILLSSGALAF). Over 1174 to 1186 (EDNYLEQKPRVKS) the chain is Extracellular. The chain crosses the membrane as a helical span at residues 1187–1212 (MLEYTDRVFTFIFVFEMLLKWVAYGF). The Cytoplasmic segment spans residues 1213 to 1218 (KKYFTN). Residues 1219–1240 (AWCWLDFLIVNISLTSLIAKIL) traverse the membrane as a helical segment. The Extracellular segment spans residues 1241 to 1244 (DYSD). Residues 1245 to 1266 (VASLKALRTLRALRPLRALSRF) traverse the membrane as a helical; Voltage-sensor segment. Residues 1267 to 1285 (EGMRVVVDALVGAIPSIMN) are Cytoplasmic-facing. The helical transmembrane segment at 1286 to 1313 (VLLVCLIFWLIFSIMGVNLFAGKFSRCI) threads the bilayer. Over 1314-1355 (DTSNNPFSVVNSTIVNNKSECRNQNHTGHFFWVNVKVNFDNV) the chain is Extracellular. Residues 1356 to 1377 (AMGYLALLQVATFKGWMDIMYA) constitute an intramembrane region (pore-forming). At 1378-1393 (AVDSREINSQPQWEDN) the chain is on the extracellular side. Residues 1394 to 1420 (LYMYLYFVVFIIFGGFFTLNLFVGVII) traverse the membrane as a helical segment. The Cytoplasmic portion of the chain corresponds to 1421–1473 (DNFNQQKKKLGGQDIFMTEEQKKYYNAMKKLGSKKPQKPIPRPLNKYQGFVFD). A Phosphoserine; by PKC modification is found at S1453. Residues 1460-1759 (IPRPLNKYQG…WEKFDPEATQ (300 aa)) form an IV repeat. A helical transmembrane segment spans residues 1474 to 1497 (IVTRQAFDIIIMVLICLNMITMMV). Residues 1498 to 1508 (ETDGQSEEKTK) lie on the Extracellular side of the membrane. A helical transmembrane segment spans residues 1509-1532 (ILGRINQFFVAVFTGECVMKMFAL). The Cytoplasmic segment spans residues 1533-1538 (RQYYFT). The helical transmembrane segment at 1539-1562 (NGWNVFDFIVVILSIGSLVFSAIL) threads the bilayer. Over 1563–1574 (KSLESYFSPTLF) the chain is Extracellular. Residues 1575 to 1596 (RVIRLARIGRILRLIRAAKGIR) form a helical; Voltage-sensor membrane-spanning segment. Residues 1597–1611 (TLLFALMMSLPALFN) lie on the Cytoplasmic side of the membrane. The helical transmembrane segment at 1612–1634 (IGLLLFLVMFIYSIFGMASFANV) threads the bilayer. Residues 1635–1648 (VEEAGIDDMFNFQT) lie on the Extracellular side of the membrane. Residues 1649 to 1671 (FGNSMLCLFQITTSAGWDGLLSP) constitute an intramembrane region (pore-forming). At 1672–1699 (ILNTGPPYCDPNLSNNNTSKGNCGSPTV) the chain is on the extracellular side. The helical transmembrane segment at 1700 to 1724 (GIVFFTTYIIISFLIVVNMYIAVIL) threads the bilayer. Residues 1725-1959 (ENFNVATEES…SKEGDSPGPQ (235 aa)) are Cytoplasmic-facing. The 30-residue stretch at 1853–1882 (EDISATVIQKAYRSYVLQRSLTLSNPLRVP) folds into the IQ domain. Positions 1901-1959 (ANDSGRLPDKSETTSATSFPPSYDSVTRGLSDRVNISTSNSMHNEDEVTSKEGDSPGPQ) are disordered. Over residues 1943-1959 (HNEDEVTSKEGDSPGPQ) the composition is skewed to basic and acidic residues.

It belongs to the sodium channel (TC 1.A.1.10) family. Nav1.8/SCN10A subfamily. The channel consists of an ion conducting pore forming alpha-subunit regulated by one or more associated auxiliary subunits SCN1B, SCN2B and SCN3B; electrophysiological properties may vary depending on the type of the associated beta subunits. Found in a number of complexes with PRX, DYNLT1 and PDZD2. Interacts with proteins such as FSTL1, PRX, DYNLT1, PDZD2, S100A10 and many others. Interacts with NEDD4 and NEDD4L. Ubiquitinated by NEDD4L; which promotes its endocytosis. In terms of processing, phosphorylation at Ser-1453 by PKC in a highly conserved cytoplasmic loop slows inactivation of the sodium channel and reduces peak sodium currents. Post-translationally, lacks the cysteine which covalently binds the conotoxin GVIIJ. This cysteine (position 816) is speculated in other sodium channel subunits alpha to be implied in covalent binding with the sodium channel subunit beta-2 or beta-4.

It localises to the cell membrane. It catalyses the reaction Na(+)(in) = Na(+)(out). In terms of biological role, tetrodotoxin-resistant channel that mediates the voltage-dependent sodium ion permeability of excitable membranes. Assuming opened or closed conformations in response to the voltage difference across the membrane, the protein forms a sodium-selective channel through which sodium ions may pass in accordance with their electrochemical gradient. Plays a role in neuropathic pain mechanisms. This is Sodium channel protein type 10 subunit alpha (Scn10a) from Onychomys torridus (Southern grasshopper mouse).